The chain runs to 423 residues: Polyglutamylase complex subunit TTLL1 (423 aa).

The TTL domain maps to 1-367 (MAGKVKWVTD…NGEIPDCKWN (367 aa)). ATP contacts are provided by residues Lys138, 144–145 (QG), 181–184 (SLYI), and 194–196 (KFD). Gln144 lines the a protein pocket. An L-glutamate-binding site is contributed by Arg220. 241-242 (TN) is a binding site for ATP. Lys259 is a binding site for L-glutamate. Residues Asp313, Glu326, and Asn328 each contribute to the Mg(2+) site. Residue Lys344 participates in L-glutamate binding. The segment at 391 to 423 (GAERELRSRPGQSLGPKGSRLRDAGRTVLTTWK) is disordered.

Belongs to the tubulin polyglutamylase family. In terms of assembly, part of the neuronal tubulin polyglutamylase complex which contains TPGS1, TPGS2, TTLL1, LRRC49 and NICN1. Interacts with PCM1, CSTPP1 and LRRC49. Mg(2+) serves as cofactor.

Its subcellular location is the cytoplasm. It is found in the cytoskeleton. It localises to the cilium basal body. The protein localises to the cilium axoneme. The protein resides in the cell projection. Its subcellular location is the cilium. It is found in the flagellum. It carries out the reaction (L-glutamyl)(n)-gamma-L-glutamyl-L-glutamyl-[protein] + L-glutamate + ATP = (L-glutamyl)(n+1)-gamma-L-glutamyl-L-glutamyl-[protein] + ADP + phosphate + H(+). Its function is as follows. Catalytic subunit of a polyglutamylase complex which modifies tubulin, generating side chains of glutamate on the gamma-carboxyl group of specific glutamate residues within the C-terminal tail of tubulin. Probably involved in the side-chain elongation step of the polyglutamylation reaction rather than the initiation step. Modifies both alpha- and beta-tubulins with a preference for the alpha-tail. Unlike most polyglutamylases of the tubulin--tyrosine ligase family, only displays a catalytic activity when in complex with other proteins as it is most likely lacking domains important for autonomous activity. Part of the neuronal tubulin polyglutamylase complex. Mediates cilia and flagella polyglutamylation which is essential for their biogenesis and motility. Involved in respiratory motile cilia function through the regulation of beating asymmetry. Essential for sperm flagella biogenesis, motility and male fertility. Involved in KLF4 glutamylation which impedes its ubiquitination, thereby leading to somatic cell reprogramming, pluripotency maintenance and embryogenesis. In Bos taurus (Bovine), this protein is Polyglutamylase complex subunit TTLL1 (TTLL1).